The primary structure comprises 319 residues: Very-long-chain 3-oxoacyl-CoA reductase-A (319 aa).

The helical transmembrane segment at 17–37 (LFWVGALITASLALYVVYKTI) threads the bilayer. 56–85 (GKWAVVTGATDGIGKSYAEELARRGFSMML) is a binding site for NADP(+). 2 helical membrane passes run 188–208 (GVIL…LTIY) and 282–302 (AVMG…NLGL). Position 195 (Ser195) interacts with substrate. The Proton acceptor role is filled by Tyr208.

It belongs to the short-chain dehydrogenases/reductases (SDR) family. 17-beta-HSD 3 subfamily.

The protein resides in the endoplasmic reticulum membrane. It catalyses the reaction a very-long-chain (3R)-3-hydroxyacyl-CoA + NADP(+) = a very-long-chain 3-oxoacyl-CoA + NADPH + H(+). The enzyme catalyses 17beta-estradiol + NAD(+) = estrone + NADH + H(+). It carries out the reaction 17beta-estradiol + NADP(+) = estrone + NADPH + H(+). The protein operates within lipid metabolism; fatty acid biosynthesis. Its pathway is steroid biosynthesis; estrogen biosynthesis. Its function is as follows. Catalyzes the second of the four reactions of the long-chain fatty acids elongation cycle. This endoplasmic reticulum-bound enzymatic process, allows the addition of two carbons to the chain of long- and very long-chain fatty acids/VLCFAs per cycle. This enzyme has a 3-ketoacyl-CoA reductase activity, reducing 3-ketoacyl-CoA to 3-hydroxyacyl-CoA, within each cycle of fatty acid elongation. Thereby, it may participate in the production of VLCFAs of different chain lengths that are involved in multiple biological processes as precursors of membrane lipids and lipid mediators. May also catalyze the transformation of estrone (E1) into estradiol (E2) and play a role in estrogen formation. This is Very-long-chain 3-oxoacyl-CoA reductase-A (hsd17b12a) from Danio rerio (Zebrafish).